Reading from the N-terminus, the 154-residue chain is AP-1 complex subunit sigma-3 (154 aa).

This sequence belongs to the adaptor complexes small subunit family. Adaptor protein complex 1 (AP-1) is a heterotetramer composed of two large adaptins (gamma-type subunit AP1G1 and beta-type subunit AP1B1), a medium adaptin (mu-type subunit AP1M1 or AP1M2) and a small adaptin (sigma-type subunit AP1S1 or AP1S2 or AP1S3). As to expression, widely expressed.

Its subcellular location is the golgi apparatus. It localises to the cytoplasmic vesicle membrane. It is found in the membrane. The protein localises to the clathrin-coated pit. In terms of biological role, subunit of clathrin-associated adaptor protein complex 1 that plays a role in protein sorting in the late-Golgi/trans-Golgi network (TGN) and/or endosomes. The AP complexes mediate both the recruitment of clathrin to membranes and the recognition of sorting signals within the cytosolic tails of transmembrane cargo molecules. Involved in TLR3 trafficking. The sequence is that of AP-1 complex subunit sigma-3 (AP1S3) from Homo sapiens (Human).